We begin with the raw amino-acid sequence, 385 residues long: Putative transport protein BpOF4_00890 (385 aa).

8 consecutive transmembrane segments (helical) span residues 42–62 (TIWIIISILLFLVAAYFILPV), 63–83 (SLPLVAALLTALILTPAVNAL), 93–113 (VAVMLVFTVFVVFIGLSGYYI), 191–211 (SIPGYLVTFLVYLIALFLFML), 255–275 (IIIFIVTLIGLLFIAPEVALL), 276–296 (MAFIIWLIDFVPIIGSIVILA), 304–324 (IVGDVSTGSKLLILAAVLLII), and 350–370 (LGLMLFGVIGFIIGPLLVIAF).

This sequence belongs to the autoinducer-2 exporter (AI-2E) (TC 2.A.86) family.

The protein resides in the cell membrane. In Alkalihalophilus pseudofirmus (strain ATCC BAA-2126 / JCM 17055 / OF4) (Bacillus pseudofirmus), this protein is Putative transport protein BpOF4_00890.